The sequence spans 317 residues: Small ribosomal subunit protein RACK1 (317 aa).

WD repeat units lie at residues 13–44 (GHSGWVTQIATTPKYPDMILSASRDKSIIMWK), 61–91 (GHSHFVSDVVISSDGQFALSGAWDGTLRLWD), 103–133 (GHTKDVLSVAFSADNRQIVSGSRDKTIKLWN), 146–178 (GHTEWVSCVRFSPNSSNPIIVSCGWDKMVKVWN), 190–220 (GHTGYLNTVTVSPDGSLCASGGKDGQAMLWD), 231–260 (DSGDVINALCFSPNRYWLCAATGPSIKIWD), and 281–311 (AEPPQCTSLAWSADGQTLFAGYTDNLIRVWQ).

It belongs to the WD repeat G protein beta family. Ribosomal protein RACK1 subfamily.

It is found in the cytoplasm. Its function is as follows. Involved in the recruitment, assembly and/or regulation of a variety of signaling molecules. Interacts with a wide variety of proteins and plays a role in many cellular processes. Required for VANGL2 membrane localization, inhibits Wnt signaling and regulates cellular polarization and oriented cell division during gastrulation. The sequence is that of Small ribosomal subunit protein RACK1 (gnb2l1) from Oreochromis niloticus (Nile tilapia).